The sequence spans 20 residues: Endo-1,6-beta-glucanase (20 aa).

Belongs to the glycosyl hydrolase 5 (cellulase A) family.

It is found in the secreted. The protein localises to the extracellular space. It carries out the reaction Random hydrolysis of (1-&gt;6)-linkages in (1-&gt;6)-beta-D-glucans.. Functionally, endo-1,6-beta-glucanase that has highest activity against the beta-1,6-glucan pustulan. Also active against the beta-1,6-glucan lutean. Lower activity against laminarin (beta-1,3-glucan with beta-1,6-branches). Little or no activity against gentiobiose, yeast glucan, lichenin, scleroglucan, curdlan, barley glucan, CM cellulose, HE cellulose, pachyman and pullulan. In Acremonium sp, this protein is Endo-1,6-beta-glucanase.